The chain runs to 219 residues: Probable GTP-binding protein EngB (219 aa).

Residues 26–200 (EGVEIAFAGR…RAKLDTWFAP (175 aa)) form the EngB-type G domain. GTP is bound by residues 34–41 (GRSNAGKS), 61–65 (GRTQL), 79–82 (DLPG), 146–149 (TKAD), and 179–181 (FSS). S41 and T63 together coordinate Mg(2+).

It belongs to the TRAFAC class TrmE-Era-EngA-EngB-Septin-like GTPase superfamily. EngB GTPase family. Mg(2+) is required as a cofactor.

Its function is as follows. Necessary for normal cell division and for the maintenance of normal septation. The protein is Probable GTP-binding protein EngB of Vibrio parahaemolyticus serotype O3:K6 (strain RIMD 2210633).